A 397-amino-acid chain; its full sequence is MAKEKFERNKPHVNVGTIGHVDHGKTTLTAALTKVCSDTWGGSARAFDQIDNAPEEKARGITINTSHVEYDSAVRHYAHVDCPGHADYVKNMITGAAQMDGAILVCSAADGPMPQTREHILLSRQVGVPYIVVFLNKADMVDDAELLELVEMEVRDLLNTYDFPGDDTPIIIGSALMALEGKDDNGIGVSAVQKLVETLDSYIPEPVRAIDQPFLMPIEDVFSISGRGTVVTGRVERGIIKVQEEVEIVGIKATTKTTCTGVEMFRKLLDEGRAGENVGILLRGTKREDVERGQVLAKPGTIKPHTKFECEVYVLSKEEGGRHTPFFKGYRPQFYFRTTDVTGNCELPEGVEMVMPGDNIKMVVTLIAPIAMEDGLRFAIREGGRTVGAGVVAKIIE.

In terms of domain architecture, tr-type G spans 10–207; sequence KPHVNVGTIG…TLDSYIPEPV (198 aa). Residues 19–26 form a G1 region; it reads GHVDHGKT. 19–26 contributes to the GTP binding site; that stretch reads GHVDHGKT. T26 contacts Mg(2+). The segment at 60 to 64 is G2; the sequence is GITIN. Phosphotyrosine is present on Y77. A G3 region spans residues 81-84; it reads DCPG. GTP is bound at residue 81 to 85; the sequence is DCPGH. Y88 bears the Phosphotyrosine mark. 136–139 is a GTP binding site; that stretch reads NKAD. The segment at 136–139 is G4; that stretch reads NKAD. The tract at residues 174–176 is G5; the sequence is SAL.

This sequence belongs to the TRAFAC class translation factor GTPase superfamily. Classic translation factor GTPase family. EF-Tu/EF-1A subfamily. As to quaternary structure, monomer.

The protein localises to the cytoplasm. It catalyses the reaction GTP + H2O = GDP + phosphate + H(+). Functionally, GTP hydrolase that promotes the GTP-dependent binding of aminoacyl-tRNA to the A-site of ribosomes during protein biosynthesis. This is Elongation factor Tu from Pseudomonas aeruginosa (strain UCBPP-PA14).